The chain runs to 380 residues: 3-dehydroquinate synthase (380 aa).

NAD(+)-binding positions include 100 to 104 (GAASD), 124 to 125 (TT), lysine 137, and lysine 146. Glutamate 179, histidine 251, and histidine 267 together coordinate Zn(2+).

It belongs to the sugar phosphate cyclases superfamily. Dehydroquinate synthase family. NAD(+) is required as a cofactor. It depends on Co(2+) as a cofactor. Requires Zn(2+) as cofactor.

It localises to the cytoplasm. It catalyses the reaction 7-phospho-2-dehydro-3-deoxy-D-arabino-heptonate = 3-dehydroquinate + phosphate. It participates in metabolic intermediate biosynthesis; chorismate biosynthesis; chorismate from D-erythrose 4-phosphate and phosphoenolpyruvate: step 2/7. Functionally, catalyzes the conversion of 3-deoxy-D-arabino-heptulosonate 7-phosphate (DAHP) to dehydroquinate (DHQ). The sequence is that of 3-dehydroquinate synthase from Tropheryma whipplei (strain TW08/27) (Whipple's bacillus).